The primary structure comprises 293 residues: 3-methyl-2-oxobutanoate hydroxymethyltransferase (293 aa).

Residues 1–29 (MTAAHDRSENQPGRPGGETTAPYGSAPRR) are disordered. Mg(2+) contacts are provided by Asp73 and Asp112. 3-methyl-2-oxobutanoate contacts are provided by residues 73–74 (DS), Asp112, and Lys142. Position 144 (Glu144) interacts with Mg(2+). The active-site Proton acceptor is the Glu210.

The protein belongs to the PanB family. In terms of assembly, homodecamer; pentamer of dimers. Requires Mg(2+) as cofactor.

The protein resides in the cytoplasm. It carries out the reaction 3-methyl-2-oxobutanoate + (6R)-5,10-methylene-5,6,7,8-tetrahydrofolate + H2O = 2-dehydropantoate + (6S)-5,6,7,8-tetrahydrofolate. It functions in the pathway cofactor biosynthesis; (R)-pantothenate biosynthesis; (R)-pantoate from 3-methyl-2-oxobutanoate: step 1/2. Catalyzes the reversible reaction in which hydroxymethyl group from 5,10-methylenetetrahydrofolate is transferred onto alpha-ketoisovalerate to form ketopantoate. The polypeptide is 3-methyl-2-oxobutanoate hydroxymethyltransferase (Saccharopolyspora erythraea (strain ATCC 11635 / DSM 40517 / JCM 4748 / NBRC 13426 / NCIMB 8594 / NRRL 2338)).